A 477-amino-acid polypeptide reads, in one-letter code: Ectonucleotide pyrophosphatase/phosphodiesterase family member 5 (477 aa).

The first 24 residues, 1 to 24, serve as a signal peptide directing secretion; sequence MTSKFLLVSFILAALSLSTTFSLQ. The Zn(2+) site is built by D36 and T72. T72 acts as the Nucleophile in catalysis. N-linked (GlcNAc...) asparagine glycans are attached at residues N101 and N158. Zn(2+) is bound by residues D191, H195, D238, and H239. N-linked (GlcNAc...) asparagine glycans are attached at residues N292 and N329. H339 provides a ligand contact to Zn(2+). N-linked (GlcNAc...) asparagine glycans are attached at residues N362, N369, N382, and N389. A helical membrane pass occupies residues 432–452; the sequence is PYFIGVSLGSIIVIVFFVIFI.

This sequence belongs to the nucleotide pyrophosphatase/phosphodiesterase family. The cofactor is Zn(2+). N-glycosylated.

The protein localises to the secreted. Its subcellular location is the membrane. Its function is as follows. Can hydrolyze NAD but cannot hydrolyze nucleotide di- and triphosphates. Lacks lysopholipase D activity. May play a role in neuronal cell communication. The chain is Ectonucleotide pyrophosphatase/phosphodiesterase family member 5 from Homo sapiens (Human).